A 369-amino-acid polypeptide reads, in one-letter code: Glutamate 5-kinase (369 aa).

ATP is bound at residue Lys-9. 3 residues coordinate substrate: Ser-49, Asp-136, and Asn-148. ATP is bound by residues 168–169 (TD) and 210–216 (TGGMLTK). The PUA domain maps to 275 to 355 (QGSIWVDKGA…KGVLIYRDDW (81 aa)).

It belongs to the glutamate 5-kinase family.

The protein resides in the cytoplasm. It catalyses the reaction L-glutamate + ATP = L-glutamyl 5-phosphate + ADP. It functions in the pathway amino-acid biosynthesis; L-proline biosynthesis; L-glutamate 5-semialdehyde from L-glutamate: step 1/2. Catalyzes the transfer of a phosphate group to glutamate to form L-glutamate 5-phosphate. The protein is Glutamate 5-kinase of Streptococcus pneumoniae serotype 4 (strain ATCC BAA-334 / TIGR4).